A 228-amino-acid chain; its full sequence is Sec-independent protein translocase protein TatB (228 aa).

The helical transmembrane segment at 1–21 (MFDFGLGELIFVGIIALIVLG) threads the bilayer. 2 disordered regions span residues 106-164 (TPAD…TDKD) and 196-228 (VPHTTSLRKQAINRKRDFRPKHRAKPKLRVRKS). The span at 135–151 (PSERSDTSAETLGDDRQ) shows a compositional bias: basic and acidic residues. A compositionally biased stretch (basic residues) spans 206 to 228 (AINRKRDFRPKHRAKPKLRVRKS).

This sequence belongs to the TatB family. The Tat system comprises two distinct complexes: a TatABC complex, containing multiple copies of TatA, TatB and TatC subunits, and a separate TatA complex, containing only TatA subunits. Substrates initially bind to the TatABC complex, which probably triggers association of the separate TatA complex to form the active translocon.

It is found in the cell inner membrane. Its function is as follows. Part of the twin-arginine translocation (Tat) system that transports large folded proteins containing a characteristic twin-arginine motif in their signal peptide across membranes. Together with TatC, TatB is part of a receptor directly interacting with Tat signal peptides. TatB may form an oligomeric binding site that transiently accommodates folded Tat precursor proteins before their translocation. This chain is Sec-independent protein translocase protein TatB, found in Neisseria gonorrhoeae (strain ATCC 700825 / FA 1090).